The chain runs to 455 residues: Probable carboxypeptidase MCYG_07204 (455 aa).

The signal sequence occupies residues 1-21 (MQKTYLLALLVSSLASVRSLA). The N-linked (GlcNAc...) asparagine glycan is linked to Asn-93. Zn(2+) is bound at residue Asp-170. Glu-202 (proton acceptor) is an active-site residue. Glu-203 is a Zn(2+) binding site. An N-linked (GlcNAc...) asparagine glycan is attached at Asn-390.

It belongs to the peptidase M20A family. Requires Zn(2+) as cofactor.

It is found in the secreted. In Arthroderma otae (strain ATCC MYA-4605 / CBS 113480) (Microsporum canis), this protein is Probable carboxypeptidase MCYG_07204.